A 254-amino-acid chain; its full sequence is Dihydroorotate dehydrogenase B (NAD(+)), electron transfer subunit (254 aa).

The 99-residue stretch at 1-99 (MLQTEMKVIQ…LGPLGKGFDI (99 aa)) folds into the FAD-binding FR-type domain. FAD is bound by residues 50–53 (RPIS), 67–69 (LYR), and 74–75 (GT). [2Fe-2S] cluster is bound by residues Cys-218, Cys-223, Cys-226, and Cys-241.

It belongs to the PyrK family. As to quaternary structure, heterotetramer of 2 PyrK and 2 PyrD type B subunits. Requires [2Fe-2S] cluster as cofactor. FAD serves as cofactor.

Its pathway is pyrimidine metabolism; UMP biosynthesis via de novo pathway; orotate from (S)-dihydroorotate (NAD(+) route): step 1/1. Functionally, responsible for channeling the electrons from the oxidation of dihydroorotate from the FMN redox center in the PyrD type B subunit to the ultimate electron acceptor NAD(+). The protein is Dihydroorotate dehydrogenase B (NAD(+)), electron transfer subunit of Listeria monocytogenes serotype 4a (strain HCC23).